Here is a 316-residue protein sequence, read N- to C-terminus: MGNRHAKAKSHHGFDVDHDAKKLNKACKGMGTDEAAIIEILSSRTSDERQQIKQKYKATYGKDLEEVFKSDLSGNFEKTALALLDRPSEYDARQLQKAMKGLGTDEAVLIEILCTRTNKEIMAIKEAYQRLFDRSLESDVKADTSGNLKAILVSLLQANRDEGDDVDKDLAGQDAKDLYDAGDGRWGTDELAFNEVLAKRSHKQLRATFQAYQILIDKDIEEAIEAETSGDLQKAYLTLVRCARDQEGYFADRLYKSMKGTGTDEETLIHIIVTRAEVDLQGIKAKFQEKYQKSLSDMVRSDTSGDFQKLLVALLH.

The N-myristoyl glycine moiety is linked to residue Gly2. Annexin repeat units follow at residues 14 to 85, 86 to 157, 169 to 241, and 245 to 316; these read FDVD…ALLD, RPSE…SLLQ, DLAG…TLVR, and DQEG…ALLH.

The protein belongs to the annexin family. In terms of assembly, monomer and homodimer. Detected in intestine, and at much lower levels also in kidney (at protein level).

The protein resides in the apical cell membrane. The protein localises to the cell membrane. It is found in the cytoplasmic vesicle. Functionally, binds to membranes enriched in phosphatidylserine or phosphatidylglycerol in a calcium-dependent manner. Half-maximal membrane binding requires about 60 uM calcium. Does not bind to membranes that lack phospholipids with an acidic headgroup. In terms of biological role, binds to membranes enriched in phosphatidylserine or phosphatidylglycerol in a calcium-dependent manner, but requires higher calcium levels for membrane binding than isoform A. Half-maximal membrane binding requires about 320 uM calcium. May play a role in vesicular traffic to the apical plasma membrane. The protein is Annexin A13 (ANXA13) of Canis lupus familiaris (Dog).